Consider the following 147-residue polypeptide: Arginine vasopressin-induced protein 1 (147 aa).

2 disordered regions span residues 1-27 (MGTP…KQAS) and 99-147 (EPHS…QIRH). Over residues 108–119 (QSATETASTEQY) the composition is skewed to polar residues. Residues 121–134 (HSRRKSARIRRNWK) are compositionally biased toward basic residues.

Its function is as follows. May be involved in MAP kinase activation, epithelial sodium channel (ENaC) down-regulation and cell cycling. The chain is Arginine vasopressin-induced protein 1 (AVPI1) from Pongo abelii (Sumatran orangutan).